The sequence spans 86 residues: Large ribosomal subunit protein bL27 (86 aa).

Positions 1–10 are enriched in gly residues; sequence MAQKKGGGST. The interval 1 to 21 is disordered; that stretch reads MAQKKGGGSTRNGRDSESKRL.

It belongs to the bacterial ribosomal protein bL27 family.

This chain is Large ribosomal subunit protein bL27, found in Ralstonia pickettii (strain 12J).